The chain runs to 61 residues: Large ribosomal subunit protein eL24 (61 aa).

Zn(2+) is bound by residues cysteine 7, cysteine 10, cysteine 33, and cysteine 37. Residues 7 to 37 (CTYCGRSIEPGTGLMYVKNDGSVLWFCSSKC) form a C4-type zinc finger.

Belongs to the eukaryotic ribosomal protein eL24 family. In terms of assembly, part of the 50S ribosomal subunit. Forms a cluster with proteins L3 and L14. Zn(2+) serves as cofactor.

Binds to the 23S rRNA. The chain is Large ribosomal subunit protein eL24 from Hyperthermus butylicus (strain DSM 5456 / JCM 9403 / PLM1-5).